Reading from the N-terminus, the 251-residue chain is Probable transcriptional regulatory protein cauri_1421 (251 aa).

Positions 1-21 (MAGHSKWATTKHKKAANDAKR) are disordered.

It belongs to the TACO1 family.

It localises to the cytoplasm. In Corynebacterium aurimucosum (strain ATCC 700975 / DSM 44827 / CIP 107346 / CN-1) (Corynebacterium nigricans), this protein is Probable transcriptional regulatory protein cauri_1421.